Here is a 635-residue protein sequence, read N- to C-terminus: Biosynthetic arginine decarboxylase (635 aa).

The residue at position 100 (Lys100) is an N6-(pyridoxal phosphate)lysine. 282–292 (LDIGGGLGVDY) is a binding site for substrate.

Belongs to the Orn/Lys/Arg decarboxylase class-II family. SpeA subfamily. The cofactor is Mg(2+). It depends on pyridoxal 5'-phosphate as a cofactor.

The enzyme catalyses L-arginine + H(+) = agmatine + CO2. It functions in the pathway amine and polyamine biosynthesis; agmatine biosynthesis; agmatine from L-arginine: step 1/1. Its function is as follows. Catalyzes the biosynthesis of agmatine from arginine. The protein is Biosynthetic arginine decarboxylase of Trichlorobacter lovleyi (strain ATCC BAA-1151 / DSM 17278 / SZ) (Geobacter lovleyi).